Here is a 107-residue protein sequence, read N- to C-terminus: ATP-dependent Clp protease adapter protein ClpS (107 aa).

The protein belongs to the ClpS family. Binds to the N-terminal domain of the chaperone ClpA.

Involved in the modulation of the specificity of the ClpAP-mediated ATP-dependent protein degradation. This chain is ATP-dependent Clp protease adapter protein ClpS, found in Syntrophus aciditrophicus (strain SB).